The following is a 116-amino-acid chain: Peptidyl-tRNA hydrolase (116 aa).

Belongs to the PTH2 family.

It localises to the cytoplasm. It catalyses the reaction an N-acyl-L-alpha-aminoacyl-tRNA + H2O = an N-acyl-L-amino acid + a tRNA + H(+). In terms of biological role, the natural substrate for this enzyme may be peptidyl-tRNAs which drop off the ribosome during protein synthesis. The protein is Peptidyl-tRNA hydrolase of Methanopyrus kandleri (strain AV19 / DSM 6324 / JCM 9639 / NBRC 100938).